A 673-amino-acid chain; its full sequence is DNA ligase (673 aa).

NAD(+)-binding positions include 38–42 (DSVYD), 87–88 (SL), and E119. K121 serves as the catalytic N6-AMP-lysine intermediate. NAD(+)-binding residues include R142, E179, K296, and K320. 4 residues coordinate Zn(2+): C414, C417, C432, and C438. Residues 595-673 (VVKSEIAGKT…EEAFLKLLKS (79 aa)) form the BRCT domain.

This sequence belongs to the NAD-dependent DNA ligase family. LigA subfamily. It depends on Mg(2+) as a cofactor. Mn(2+) is required as a cofactor.

The catalysed reaction is NAD(+) + (deoxyribonucleotide)n-3'-hydroxyl + 5'-phospho-(deoxyribonucleotide)m = (deoxyribonucleotide)n+m + AMP + beta-nicotinamide D-nucleotide.. Its function is as follows. DNA ligase that catalyzes the formation of phosphodiester linkages between 5'-phosphoryl and 3'-hydroxyl groups in double-stranded DNA using NAD as a coenzyme and as the energy source for the reaction. It is essential for DNA replication and repair of damaged DNA. The polypeptide is DNA ligase (Coxiella burnetii (strain RSA 493 / Nine Mile phase I)).